We begin with the raw amino-acid sequence, 728 residues long: 1,4-alpha-glucan branching enzyme GlgB (728 aa).

Asp-405 acts as the Nucleophile in catalysis. Glu-458 (proton donor) is an active-site residue.

The protein belongs to the glycosyl hydrolase 13 family. GlgB subfamily. In terms of assembly, monomer.

It carries out the reaction Transfers a segment of a (1-&gt;4)-alpha-D-glucan chain to a primary hydroxy group in a similar glucan chain.. It functions in the pathway glycan biosynthesis; glycogen biosynthesis. In terms of biological role, catalyzes the formation of the alpha-1,6-glucosidic linkages in glycogen by scission of a 1,4-alpha-linked oligosaccharide from growing alpha-1,4-glucan chains and the subsequent attachment of the oligosaccharide to the alpha-1,6 position. The sequence is that of 1,4-alpha-glucan branching enzyme GlgB from Klebsiella pneumoniae subsp. pneumoniae (strain ATCC 700721 / MGH 78578).